An 85-amino-acid chain; its full sequence is Putative membrane protein insertion efficiency factor (85 aa).

This sequence belongs to the UPF0161 family.

Its subcellular location is the cell membrane. Its function is as follows. Could be involved in insertion of integral membrane proteins into the membrane. The chain is Putative membrane protein insertion efficiency factor from Leifsonia xyli subsp. xyli (strain CTCB07).